The chain runs to 673 residues: DNA ligase (673 aa).

Residues 34–38 (DAEYD), 83–84 (SL), and Glu-116 contribute to the NAD(+) site. Catalysis depends on Lys-118, which acts as the N6-AMP-lysine intermediate. Residues Arg-139, Glu-176, Lys-293, and Lys-317 each coordinate NAD(+). The Zn(2+) site is built by Cys-411, Cys-414, Cys-429, and Cys-435. The region spanning 595 to 673 (NQQNPFFGKT…EDEFLKWVNS (79 aa)) is the BRCT domain.

Belongs to the NAD-dependent DNA ligase family. LigA subfamily. It depends on Mg(2+) as a cofactor. The cofactor is Mn(2+).

The enzyme catalyses NAD(+) + (deoxyribonucleotide)n-3'-hydroxyl + 5'-phospho-(deoxyribonucleotide)m = (deoxyribonucleotide)n+m + AMP + beta-nicotinamide D-nucleotide.. DNA ligase that catalyzes the formation of phosphodiester linkages between 5'-phosphoryl and 3'-hydroxyl groups in double-stranded DNA using NAD as a coenzyme and as the energy source for the reaction. It is essential for DNA replication and repair of damaged DNA. The polypeptide is DNA ligase (Legionella pneumophila (strain Lens)).